A 146-amino-acid polypeptide reads, in one-letter code: Large ribosomal subunit protein uL15 (146 aa).

Residues 1-56 (MKLHELKAAEGANKASKRVGRGTGSGLGKTSGKGQNGQNSRSGGGVRPGFEGGQMP) form a disordered region. Gly residues-rich tracts occupy residues 21 to 35 (RGTG…GKGQ) and 42 to 52 (SGGGVRPGFEG).

The protein belongs to the universal ribosomal protein uL15 family. As to quaternary structure, part of the 50S ribosomal subunit.

Binds to the 23S rRNA. This chain is Large ribosomal subunit protein uL15, found in Clostridium botulinum (strain Langeland / NCTC 10281 / Type F).